The sequence spans 157 residues: 2-C-methyl-D-erythritol 2,4-cyclodiphosphate synthase (157 aa).

2 residues coordinate a divalent metal cation: Asp8 and His10. 4-CDP-2-C-methyl-D-erythritol 2-phosphate contacts are provided by residues 8-10 and 34-35; these read DVH and HS. His42 is a binding site for a divalent metal cation. 4-CDP-2-C-methyl-D-erythritol 2-phosphate is bound by residues 56-58, 61-65, 132-135, Phe139, and Arg142; these read DIG, FPDTD, and TTTE.

It belongs to the IspF family. Homotrimer. A divalent metal cation serves as cofactor.

It catalyses the reaction 4-CDP-2-C-methyl-D-erythritol 2-phosphate = 2-C-methyl-D-erythritol 2,4-cyclic diphosphate + CMP. It functions in the pathway isoprenoid biosynthesis; isopentenyl diphosphate biosynthesis via DXP pathway; isopentenyl diphosphate from 1-deoxy-D-xylulose 5-phosphate: step 4/6. Its function is as follows. Involved in the biosynthesis of isopentenyl diphosphate (IPP) and dimethylallyl diphosphate (DMAPP), two major building blocks of isoprenoid compounds. Catalyzes the conversion of 4-diphosphocytidyl-2-C-methyl-D-erythritol 2-phosphate (CDP-ME2P) to 2-C-methyl-D-erythritol 2,4-cyclodiphosphate (ME-CPP) with a corresponding release of cytidine 5-monophosphate (CMP). The protein is 2-C-methyl-D-erythritol 2,4-cyclodiphosphate synthase of Geobacter metallireducens (strain ATCC 53774 / DSM 7210 / GS-15).